We begin with the raw amino-acid sequence, 298 residues long: GTP-binding protein REM 1 (298 aa).

Residues 1–73 (MTLNTEQEAK…DDWSSESSDS (73 aa)) form a disordered region. Residues 35-55 (TVPSTQSQHPRLGQSASLNPP) are compositionally biased toward polar residues. S51 is modified (phosphoserine). Low complexity predominate over residues 63 to 73 (PDDWSSESSDS). Residues 87-94 (GDPGVGKT) and 195-198 (NKAD) each bind GTP. Residues 268-287 (ARRFLARLTARSARRRALKA) are calmodulin-binding.

This sequence belongs to the small GTPase superfamily. RGK family. As to quaternary structure, in vitro, interacts with calmodulin in a calcium-dependent manner. In terms of tissue distribution, most highly expressed in the endothelial lining of the blood vessels in uterus and heart. Lower levels found in spleen, lymph node, kidney and testis. Also found in cells with secretory function such as the islets of Langerhans, lobule/duct epithelium in the breast, bile duct epithelium in the liver, surface epithelium in the endometrial glands of the uterus, colon mucosa and acinar cells in the pancreas and the prostate.

In terms of biological role, promotes endothelial cell sprouting and actin cytoskeletal reorganization. May be involved in angiogenesis. May function in Ca(2+) signaling. The polypeptide is GTP-binding protein REM 1 (REM1) (Homo sapiens (Human)).